Reading from the N-terminus, the 449-residue chain is Exodeoxyribonuclease 7 large subunit (449 aa).

Belongs to the XseA family. In terms of assembly, heterooligomer composed of large and small subunits.

Its subcellular location is the cytoplasm. The enzyme catalyses Exonucleolytic cleavage in either 5'- to 3'- or 3'- to 5'-direction to yield nucleoside 5'-phosphates.. In terms of biological role, bidirectionally degrades single-stranded DNA into large acid-insoluble oligonucleotides, which are then degraded further into small acid-soluble oligonucleotides. The protein is Exodeoxyribonuclease 7 large subunit of Salmonella agona (strain SL483).